The primary structure comprises 739 residues: Phosphoribosylformylglycinamidine synthase subunit PurL (739 aa).

The active site involves H53. ATP-binding residues include Y56 and K95. A Mg(2+)-binding site is contributed by E97. Substrate is bound by residues 98 to 101 (SHNH) and R120. The active-site Proton acceptor is H99. Position 121 (D121) interacts with Mg(2+). Position 244 (Q244) interacts with substrate. D274 contacts Mg(2+). 318-320 (ESQ) lines the substrate pocket. Residues D501 and G538 each coordinate ATP. Mg(2+) is bound at residue N539. A substrate-binding site is contributed by S541.

This sequence belongs to the FGAMS family. As to quaternary structure, monomer. Part of the FGAM synthase complex composed of 1 PurL, 1 PurQ and 2 PurS subunits.

It is found in the cytoplasm. The catalysed reaction is N(2)-formyl-N(1)-(5-phospho-beta-D-ribosyl)glycinamide + L-glutamine + ATP + H2O = 2-formamido-N(1)-(5-O-phospho-beta-D-ribosyl)acetamidine + L-glutamate + ADP + phosphate + H(+). It participates in purine metabolism; IMP biosynthesis via de novo pathway; 5-amino-1-(5-phospho-D-ribosyl)imidazole from N(2)-formyl-N(1)-(5-phospho-D-ribosyl)glycinamide: step 1/2. Its function is as follows. Part of the phosphoribosylformylglycinamidine synthase complex involved in the purines biosynthetic pathway. Catalyzes the ATP-dependent conversion of formylglycinamide ribonucleotide (FGAR) and glutamine to yield formylglycinamidine ribonucleotide (FGAM) and glutamate. The FGAM synthase complex is composed of three subunits. PurQ produces an ammonia molecule by converting glutamine to glutamate. PurL transfers the ammonia molecule to FGAR to form FGAM in an ATP-dependent manner. PurS interacts with PurQ and PurL and is thought to assist in the transfer of the ammonia molecule from PurQ to PurL. This Listeria monocytogenes serovar 1/2a (strain ATCC BAA-679 / EGD-e) protein is Phosphoribosylformylglycinamidine synthase subunit PurL.